A 275-amino-acid chain; its full sequence is Polyamine aminopropyltransferase 1 (275 aa).

Residues 2–235 (ELWFTEKQTK…GLWTFTIGSK (234 aa)) form the PABS domain. Gln-31 provides a ligand contact to S-methyl-5'-thioadenosine. 2 residues coordinate spermidine: His-62 and Asp-86. Residues Glu-106 and 137-138 (DG) contribute to the S-methyl-5'-thioadenosine site. The active-site Proton acceptor is the Asp-155. 155–158 (DSTE) lines the spermidine pocket. Residue Pro-162 coordinates S-methyl-5'-thioadenosine.

It belongs to the spermidine/spermine synthase family. In terms of assembly, homodimer or homotetramer.

It localises to the cytoplasm. It carries out the reaction S-adenosyl 3-(methylsulfanyl)propylamine + putrescine = S-methyl-5'-thioadenosine + spermidine + H(+). It participates in amine and polyamine biosynthesis; spermidine biosynthesis; spermidine from putrescine: step 1/1. Functionally, catalyzes the irreversible transfer of a propylamine group from the amino donor S-adenosylmethioninamine (decarboxy-AdoMet) to putrescine (1,4-diaminobutane) to yield spermidine. This Bacillus cereus (strain ATCC 14579 / DSM 31 / CCUG 7414 / JCM 2152 / NBRC 15305 / NCIMB 9373 / NCTC 2599 / NRRL B-3711) protein is Polyamine aminopropyltransferase 1.